A 604-amino-acid chain; its full sequence is Protein glass (604 aa).

Disordered stretches follow at residues 111–139, 199–237, 359–400, and 414–434; these read ISTTPPASSGNGSSNNGAGGGSSGNHGYW, NSHNHGQMHSQHQQHQHQQSQVQASHVGNSLLQSSGGNN, LPPL…SPTS, and EDEEDSNEDLDGDEGSSGGEM. Composition is skewed to low complexity over residues 117–126 and 200–237; these read ASSGNGSSNN and SHNHGQMHSQHQQHQHQQSQVQASHVGNSLLQSSGGNN. Over residues 414 to 427 the composition is skewed to acidic residues; sequence EDEEDSNEDLDGDE. 5 C2H2-type zinc fingers span residues 437–459, 465–487, 493–515, 521–543, and 549–571; these read NLCRLCGKTYARPSTLKTHLRTH, YRCPDCNKSFSQAANLTAHVRTH, FRCPICDRRFSQSSSVTTHMRTH, YRCSSCKKSFSDSSTLTKHLRIH, and YQCKLCLLRFSQSGNLNRHMRVH. The segment at 566 to 604 is disordered; it reads RHMRVHGNNNSSNGSNGATGVGGESSTGSGVGGGNSLLT. A compositionally biased stretch (low complexity) spans 572 to 581; the sequence is GNNNSSNGSN. The segment covering 582-604 has biased composition (gly residues); it reads GATGVGGESSTGSGVGGGNSLLT.

Its subcellular location is the nucleus. Functionally, transcription factor required for gene expression specific to photoreceptor cells. In Drosophila melanogaster (Fruit fly), this protein is Protein glass (gl).